The primary structure comprises 86 residues: MNYLVMISLALLFMIGVESARDGYIAQPNNCVYHCIPLSPGCDKLCRENGATSGKCSFLAGSGLACWCVALPDNVPIKIIGQKCTR.

An N-terminal signal peptide occupies residues 1–19 (MNYLVMISLALLFMIGVES). One can recognise an LCN-type CS-alpha/beta domain in the interval 21 to 85 (RDGYIAQPNN…PIKIIGQKCT (65 aa)). 4 disulfides stabilise this stretch: C31-C84, C35-C56, C42-C66, and C46-C68.

It belongs to the long (4 C-C) scorpion toxin superfamily. Sodium channel inhibitor family. Alpha subfamily. The C-terminal basic residue is removed by a carboxypeptidase. As to expression, expressed by the venom gland.

It localises to the secreted. Alpha toxins bind voltage-independently at site-3 of sodium channels (Nav) and inhibit the inactivation of the activated channels, thereby blocking neuronal transmission. The protein is Toxin Aam3 of Androctonus amoreuxi (African fattail scorpion).